The primary structure comprises 156 residues: Small ribosomal subunit protein uS7 (156 aa).

It belongs to the universal ribosomal protein uS7 family. As to quaternary structure, part of the 30S ribosomal subunit. Contacts proteins S9 and S11.

In terms of biological role, one of the primary rRNA binding proteins, it binds directly to 16S rRNA where it nucleates assembly of the head domain of the 30S subunit. Is located at the subunit interface close to the decoding center, probably blocks exit of the E-site tRNA. This chain is Small ribosomal subunit protein uS7, found in Streptococcus sanguinis (strain SK36).